We begin with the raw amino-acid sequence, 151 residues long: Ribosome maturation factor RimP (151 aa).

The protein belongs to the RimP family.

It is found in the cytoplasm. Its function is as follows. Required for maturation of 30S ribosomal subunits. This Nitrosococcus oceani (strain ATCC 19707 / BCRC 17464 / JCM 30415 / NCIMB 11848 / C-107) protein is Ribosome maturation factor RimP.